The chain runs to 39 residues: Conotoxin Cl14.7 (39 aa).

The propeptide occupies 1 to 15 (MGDLSEADSMKHQLQ).

In terms of processing, contains 2 disulfide bonds. In terms of tissue distribution, expressed by the venom duct.

Its subcellular location is the secreted. This chain is Conotoxin Cl14.7, found in Californiconus californicus (California cone).